Consider the following 343-residue polypeptide: Phosphate acyltransferase (343 aa).

Belongs to the PlsX family. In terms of assembly, homodimer. Probably interacts with PlsY.

It is found in the cytoplasm. It catalyses the reaction a fatty acyl-[ACP] + phosphate = an acyl phosphate + holo-[ACP]. It functions in the pathway lipid metabolism; phospholipid metabolism. Catalyzes the reversible formation of acyl-phosphate (acyl-PO(4)) from acyl-[acyl-carrier-protein] (acyl-ACP). This enzyme utilizes acyl-ACP as fatty acyl donor, but not acyl-CoA. The protein is Phosphate acyltransferase of Neorickettsia sennetsu (strain ATCC VR-367 / Miyayama) (Ehrlichia sennetsu).